Consider the following 106-residue polypeptide: Large ribosomal subunit protein uL24 (106 aa).

The protein belongs to the universal ribosomal protein uL24 family. In terms of assembly, part of the 50S ribosomal subunit.

Its function is as follows. One of two assembly initiator proteins, it binds directly to the 5'-end of the 23S rRNA, where it nucleates assembly of the 50S subunit. Functionally, one of the proteins that surrounds the polypeptide exit tunnel on the outside of the subunit. This Clostridium tetani (strain Massachusetts / E88) protein is Large ribosomal subunit protein uL24.